We begin with the raw amino-acid sequence, 207 residues long: MGFREKLKLYVITDRRLKPEVKSVRQALEGGATSIQLRIKDASTKEMYEVGKEIRRLTQEYDALFFVDDRIDVALAVNADGVQLGPEDMPIEVAREIAPNLIIGASVYSLEEALEAEKKGADYLGAGSVFPTKTKRDVRVIRIEGLREIVEAVSIPVVAIGGINVENVKQVLSAGVDGIAVVSAVMGASDVKKATEELRKIIEEVLG.

Residues 36-40 (QLRIK) and Asp-68 contribute to the 4-amino-2-methyl-5-(diphosphooxymethyl)pyrimidine site. The Mg(2+) site is built by Asp-69 and Asp-88. Ser-106 is a binding site for 4-amino-2-methyl-5-(diphosphooxymethyl)pyrimidine. 132–134 (TKT) provides a ligand contact to 2-[(2R,5Z)-2-carboxy-4-methylthiazol-5(2H)-ylidene]ethyl phosphate. Lys-135 provides a ligand contact to 4-amino-2-methyl-5-(diphosphooxymethyl)pyrimidine. Residues Gly-162 and 182–183 (VS) each bind 2-[(2R,5Z)-2-carboxy-4-methylthiazol-5(2H)-ylidene]ethyl phosphate.

It belongs to the thiamine-phosphate synthase family. Requires Mg(2+) as cofactor.

It catalyses the reaction 2-[(2R,5Z)-2-carboxy-4-methylthiazol-5(2H)-ylidene]ethyl phosphate + 4-amino-2-methyl-5-(diphosphooxymethyl)pyrimidine + 2 H(+) = thiamine phosphate + CO2 + diphosphate. It carries out the reaction 2-(2-carboxy-4-methylthiazol-5-yl)ethyl phosphate + 4-amino-2-methyl-5-(diphosphooxymethyl)pyrimidine + 2 H(+) = thiamine phosphate + CO2 + diphosphate. The catalysed reaction is 4-methyl-5-(2-phosphooxyethyl)-thiazole + 4-amino-2-methyl-5-(diphosphooxymethyl)pyrimidine + H(+) = thiamine phosphate + diphosphate. Its pathway is cofactor biosynthesis; thiamine diphosphate biosynthesis; thiamine phosphate from 4-amino-2-methyl-5-diphosphomethylpyrimidine and 4-methyl-5-(2-phosphoethyl)-thiazole: step 1/1. In terms of biological role, condenses 4-methyl-5-(beta-hydroxyethyl)thiazole monophosphate (THZ-P) and 2-methyl-4-amino-5-hydroxymethyl pyrimidine pyrophosphate (HMP-PP) to form thiamine monophosphate (TMP). The protein is Thiamine-phosphate synthase of Pyrococcus abyssi (strain GE5 / Orsay).